Consider the following 338-residue polypeptide: Heat-inducible transcription repressor HrcA (338 aa).

The protein belongs to the HrcA family.

Functionally, negative regulator of class I heat shock genes (grpE-dnaK-dnaJ and groELS operons). Prevents heat-shock induction of these operons. The polypeptide is Heat-inducible transcription repressor HrcA (Bacillus mycoides (strain KBAB4) (Bacillus weihenstephanensis)).